A 427-amino-acid polypeptide reads, in one-letter code: Enolase (427 aa).

Q163 contributes to the (2R)-2-phosphoglycerate binding site. The Proton donor role is filled by E205. D242, E285, and D312 together coordinate Mg(2+). K337, R366, S367, and K388 together coordinate (2R)-2-phosphoglycerate. The Proton acceptor role is filled by K337.

Belongs to the enolase family. Requires Mg(2+) as cofactor.

The protein resides in the cytoplasm. The protein localises to the secreted. Its subcellular location is the cell surface. It catalyses the reaction (2R)-2-phosphoglycerate = phosphoenolpyruvate + H2O. Its pathway is carbohydrate degradation; glycolysis; pyruvate from D-glyceraldehyde 3-phosphate: step 4/5. Functionally, catalyzes the reversible conversion of 2-phosphoglycerate (2-PG) into phosphoenolpyruvate (PEP). It is essential for the degradation of carbohydrates via glycolysis. The protein is Enolase of Rhodopseudomonas palustris (strain TIE-1).